A 275-amino-acid chain; its full sequence is Shikimate dehydrogenase (NADP(+)) (275 aa).

Shikimate is bound by residues 19–21 and Thr-66; that span reads SKS. Lys-70 serves as the catalytic Proton acceptor. Glu-82 is an NADP(+) binding site. The shikimate site is built by Asn-91 and Asp-106. Residues 130-134, 154-159, and Met-217 each bind NADP(+); these read GAGGA and NRTASK. Position 219 (Tyr-219) interacts with shikimate. Gly-241 contributes to the NADP(+) binding site.

Belongs to the shikimate dehydrogenase family. Homodimer.

The enzyme catalyses shikimate + NADP(+) = 3-dehydroshikimate + NADPH + H(+). The protein operates within metabolic intermediate biosynthesis; chorismate biosynthesis; chorismate from D-erythrose 4-phosphate and phosphoenolpyruvate: step 4/7. Its function is as follows. Involved in the biosynthesis of the chorismate, which leads to the biosynthesis of aromatic amino acids. Catalyzes the reversible NADPH linked reduction of 3-dehydroshikimate (DHSA) to yield shikimate (SA). This Colwellia psychrerythraea (strain 34H / ATCC BAA-681) (Vibrio psychroerythus) protein is Shikimate dehydrogenase (NADP(+)).